Consider the following 942-residue polypeptide: Inter alpha-trypsin inhibitor, heavy chain 4 (942 aa).

The N-terminal stretch at 1-28 (MKSPAPAHMWNLVLFLPSLLAVLPTTTA) is a signal peptide. The 120-residue stretch at 29–148 (EKNGIDIYSL…KITFELIYQE (120 aa)) folds into the VIT domain. Residue N81 is glycosylated (N-linked (GlcNAc...) asparagine). A VWFA domain is found at 274-457 (NVIFVIDKSG…LQLQDFYHEV (184 aa)). N-linked (GlcNAc...) asparagine glycans are attached at residues N517 and N577. Residues 552-586 (TIQQQLEQRISASGAELEALEAQVLNLSLKYNFVT) are a coiled coil. Disordered stretches follow at residues 658-698 (RQYI…SDFS) and 726-745 (EKSKESTIPEESPNPDHPQV). Pro residues predominate over residues 663–690 (PGFPGPPGPPGFPAPPGPPGFPAPPGPP). An O-linked (GalNAc...) threonine glycan is attached at T732. A disulfide bridge links C761 with C937. N874 carries an N-linked (GlcNAc...) asparagine glycan.

It belongs to the ITIH family. As to quaternary structure, interacts (via C-terminus) with DNAJC1 (via SANT 2 domain). May be O-glycosylated. N-glycosylated. In terms of tissue distribution, highly expressed in liver. Weak expression in lung and heart.

It is found in the secreted. Type II acute-phase protein (APP) involved in inflammatory responses to trauma. May also play a role in liver development or regeneration. The polypeptide is Inter alpha-trypsin inhibitor, heavy chain 4 (Itih4) (Mus musculus (Mouse)).